Consider the following 259-residue polypeptide: ATP synthase subunit a (259 aa).

Helical transmembrane passes span 29 to 49 (TVNI…IWIF), 90 to 110 (IAPL…MDLI), 134 to 154 (DVNI…IYSI), 208 to 228 (LVFI…LSVP), and 230 to 250 (ALFH…LTIV).

It belongs to the ATPase A chain family. F-type ATPases have 2 components, CF(1) - the catalytic core - and CF(0) - the membrane proton channel. CF(1) has five subunits: alpha(3), beta(3), gamma(1), delta(1), epsilon(1). CF(0) has three main subunits: a(1), b(2) and c(9-12). The alpha and beta chains form an alternating ring which encloses part of the gamma chain. CF(1) is attached to CF(0) by a central stalk formed by the gamma and epsilon chains, while a peripheral stalk is formed by the delta and b chains.

The protein localises to the cell inner membrane. Key component of the proton channel; it plays a direct role in the translocation of protons across the membrane. This is ATP synthase subunit a from Aeromonas salmonicida (strain A449).